The chain runs to 191 residues: Peptidyl-tRNA hydrolase (191 aa).

Y14 contributes to the tRNA binding site. H19 (proton acceptor) is an active-site residue. Residues Y64, N66, and N112 each coordinate tRNA.

Belongs to the PTH family. In terms of assembly, monomer.

Its subcellular location is the cytoplasm. It carries out the reaction an N-acyl-L-alpha-aminoacyl-tRNA + H2O = an N-acyl-L-amino acid + a tRNA + H(+). Functionally, hydrolyzes ribosome-free peptidyl-tRNAs (with 1 or more amino acids incorporated), which drop off the ribosome during protein synthesis, or as a result of ribosome stalling. In terms of biological role, catalyzes the release of premature peptidyl moieties from peptidyl-tRNA molecules trapped in stalled 50S ribosomal subunits, and thus maintains levels of free tRNAs and 50S ribosomes. This chain is Peptidyl-tRNA hydrolase, found in Clostridium botulinum (strain Alaska E43 / Type E3).